Consider the following 153-residue polypeptide: Lipoprotein signal peptidase (153 aa).

2 consecutive transmembrane segments (helical) span residues 52-72 and 81-101; these read ILAG…IGIV and GQML…GNFI. Residues Asp111 and Asp129 contribute to the active site. The helical transmembrane segment at 124–144 threads the bilayer; it reads IFNIADSSLCVGVILLFIHML.

It belongs to the peptidase A8 family.

It is found in the cell membrane. The enzyme catalyses Release of signal peptides from bacterial membrane prolipoproteins. Hydrolyzes -Xaa-Yaa-Zaa-|-(S,diacylglyceryl)Cys-, in which Xaa is hydrophobic (preferably Leu), and Yaa (Ala or Ser) and Zaa (Gly or Ala) have small, neutral side chains.. Its pathway is protein modification; lipoprotein biosynthesis (signal peptide cleavage). This protein specifically catalyzes the removal of signal peptides from prolipoproteins. The protein is Lipoprotein signal peptidase of Bacillus velezensis (strain DSM 23117 / BGSC 10A6 / LMG 26770 / FZB42) (Bacillus amyloliquefaciens subsp. plantarum).